We begin with the raw amino-acid sequence, 209 residues long: MNVIKIALAKGRLADQSVKLLESIGIDCGPLLDKGRKLIVALPKDHLEVVFVKAPDVPTYVEHGAVDMGIVGKDVLLEANKQLYEVLDLQFGKCKFSVAGSTSMENYPTPHMRVATKYPNIAKNFFQSKGQSVEIIKQEGSVELAPMVGLADVIVDIVETGNTLRENGLMVFEDIVEISARLVLNQVSYKTKHQEIRGLIDRIAEKTGK.

The protein belongs to the ATP phosphoribosyltransferase family. Short subfamily. As to quaternary structure, heteromultimer composed of HisG and HisZ subunits.

The protein resides in the cytoplasm. It catalyses the reaction 1-(5-phospho-beta-D-ribosyl)-ATP + diphosphate = 5-phospho-alpha-D-ribose 1-diphosphate + ATP. It functions in the pathway amino-acid biosynthesis; L-histidine biosynthesis; L-histidine from 5-phospho-alpha-D-ribose 1-diphosphate: step 1/9. Its function is as follows. Catalyzes the condensation of ATP and 5-phosphoribose 1-diphosphate to form N'-(5'-phosphoribosyl)-ATP (PR-ATP). Has a crucial role in the pathway because the rate of histidine biosynthesis seems to be controlled primarily by regulation of HisG enzymatic activity. The chain is ATP phosphoribosyltransferase from Alkaliphilus metalliredigens (strain QYMF).